Here is a 241-residue protein sequence, read N- to C-terminus: ATP synthase subunit a (241 aa).

Transmembrane regions (helical) follow at residues 30–50, 91–111, 128–148, 193–213, and 214–234; these read GQVF…ISLG, FIGT…LIPW, INTT…AGLS, LVVG…VMFL, and GLFT…YYIG.

Belongs to the ATPase A chain family. In terms of assembly, F-type ATPases have 2 components, CF(1) - the catalytic core - and CF(0) - the membrane proton channel. CF(1) has five subunits: alpha(3), beta(3), gamma(1), delta(1), epsilon(1). CF(0) has four main subunits: a, b, b' and c.

It localises to the cellular thylakoid membrane. In terms of biological role, key component of the proton channel; it plays a direct role in the translocation of protons across the membrane. The polypeptide is ATP synthase subunit a (Prochlorococcus marinus (strain MIT 9312)).